Here is a 676-residue protein sequence, read N- to C-terminus: DNA ligase (676 aa).

NAD(+) contacts are provided by residues 42–46, 91–92, and E121; these read DDVYD and SL. K123 serves as the catalytic N6-AMP-lysine intermediate. R144, E178, K294, and K318 together coordinate NAD(+). Zn(2+) is bound by residues C412, C415, C430, and C435. The 81-residue stretch at 596 to 676 folds into the BRCT domain; the sequence is NSTSEFTGKR…QLQAAMDETK (81 aa).

It belongs to the NAD-dependent DNA ligase family. LigA subfamily. Requires Mg(2+) as cofactor. It depends on Mn(2+) as a cofactor.

The enzyme catalyses NAD(+) + (deoxyribonucleotide)n-3'-hydroxyl + 5'-phospho-(deoxyribonucleotide)m = (deoxyribonucleotide)n+m + AMP + beta-nicotinamide D-nucleotide.. Functionally, DNA ligase that catalyzes the formation of phosphodiester linkages between 5'-phosphoryl and 3'-hydroxyl groups in double-stranded DNA using NAD as a coenzyme and as the energy source for the reaction. It is essential for DNA replication and repair of damaged DNA. This is DNA ligase from Levilactobacillus brevis (strain ATCC 367 / BCRC 12310 / CIP 105137 / JCM 1170 / LMG 11437 / NCIMB 947 / NCTC 947) (Lactobacillus brevis).